We begin with the raw amino-acid sequence, 382 residues long: Pyrimidine monooxygenase RutA (382 aa).

FMN contacts are provided by residues 68–69, asparagine 134, glutamate 143, 159–160, and serine 209; these read IK and RY.

It belongs to the NtaA/SnaA/DszA monooxygenase family. RutA subfamily.

It carries out the reaction uracil + FMNH2 + NADH + O2 = (Z)-3-ureidoacrylate + FMN + NAD(+) + H2O + H(+). It catalyses the reaction thymine + FMNH2 + NADH + O2 = (Z)-2-methylureidoacrylate + FMN + NAD(+) + H2O + H(+). Its function is as follows. Catalyzes the pyrimidine ring opening between N-3 and C-4 by an unusual flavin hydroperoxide-catalyzed mechanism, adding oxygen atoms in the process to yield ureidoacrylate peracid, that immediately reacts with FMN forming ureidoacrylate and FMN-N(5)-oxide. The FMN-N(5)-oxide reacts spontaneously with NADH to produce FMN. Requires the flavin reductase RutF to regenerate FMN in vivo. In Escherichia coli (strain 55989 / EAEC), this protein is Pyrimidine monooxygenase RutA.